We begin with the raw amino-acid sequence, 356 residues long: MILFGSTGSIGVNALKLAALKNIPISALACGDNIALLNEQIARFKPKFVAIKDSKNKHLVKHDRVFIGQEGLEQILTECQDKLLFNAIVGFAGLKSTLKAKELGKNIALANKESLVVAGSFLKGVKFLPVDSEHAALKFLLEGKKNIAKLYITASGGAFYRYKIKDLNQVSVKDALKHPNWNMGAKITIDSATMANKLFEIIEAYHLYDFKEIDALIEPRSLVHAMCEFKNGASTAYFSKADMKLAISDAIFEKQDTPILEAVDFSKMPALKFHPISTKKYPIFKLKNTFLKEPNLGVIINAANEVGVYNFLENKSGFLDIAKCIFKALDHFGVPKISSIEEVFEYDFKTREYLRS.

Positions 7, 8, 9, 10, 31, 33, and 111 each coordinate NADPH. Residue Lys-112 participates in 1-deoxy-D-xylulose 5-phosphate binding. Residue Glu-113 participates in NADPH binding. Asp-131 provides a ligand contact to Mn(2+). Positions 132, 133, 155, and 178 each coordinate 1-deoxy-D-xylulose 5-phosphate. Glu-133 serves as a coordination point for Mn(2+). Gly-184 lines the NADPH pocket. Positions 191, 196, 197, and 200 each coordinate 1-deoxy-D-xylulose 5-phosphate. Position 200 (Glu-200) interacts with Mn(2+).

It belongs to the DXR family. Mg(2+) is required as a cofactor. The cofactor is Mn(2+).

It carries out the reaction 2-C-methyl-D-erythritol 4-phosphate + NADP(+) = 1-deoxy-D-xylulose 5-phosphate + NADPH + H(+). Its pathway is isoprenoid biosynthesis; isopentenyl diphosphate biosynthesis via DXP pathway; isopentenyl diphosphate from 1-deoxy-D-xylulose 5-phosphate: step 1/6. In terms of biological role, catalyzes the NADPH-dependent rearrangement and reduction of 1-deoxy-D-xylulose-5-phosphate (DXP) to 2-C-methyl-D-erythritol 4-phosphate (MEP). The sequence is that of 1-deoxy-D-xylulose 5-phosphate reductoisomerase from Campylobacter jejuni subsp. jejuni serotype O:6 (strain 81116 / NCTC 11828).